Consider the following 372-residue polypeptide: Tryptophan--tRNA ligase (372 aa).

Residues Pro79 to His87 carry the 'HIGH' region motif. A disordered region spans residues Lys247–Leu268. Residues Lys256 to Ser260 carry the 'KMSKS' region motif. The span at Met257–Phe267 shows a compositional bias: polar residues.

The protein belongs to the class-I aminoacyl-tRNA synthetase family.

The protein localises to the cytoplasm. It carries out the reaction tRNA(Trp) + L-tryptophan + ATP = L-tryptophyl-tRNA(Trp) + AMP + diphosphate + H(+). This is Tryptophan--tRNA ligase from Aeropyrum pernix (strain ATCC 700893 / DSM 11879 / JCM 9820 / NBRC 100138 / K1).